The chain runs to 507 residues: ATP synthase subunit alpha (507 aa).

169–176 (GDRQTGKT) is a binding site for ATP.

It belongs to the ATPase alpha/beta chains family. As to quaternary structure, F-type ATPases have 2 components, CF(1) - the catalytic core - and CF(0) - the membrane proton channel. CF(1) has five subunits: alpha(3), beta(3), gamma(1), delta(1), epsilon(1). CF(0) has three main subunits: a(1), b(2) and c(9-12). The alpha and beta chains form an alternating ring which encloses part of the gamma chain. CF(1) is attached to CF(0) by a central stalk formed by the gamma and epsilon chains, while a peripheral stalk is formed by the delta and b chains.

The protein resides in the cell membrane. It carries out the reaction ATP + H2O + 4 H(+)(in) = ADP + phosphate + 5 H(+)(out). Functionally, produces ATP from ADP in the presence of a proton gradient across the membrane. The alpha chain is a regulatory subunit. This chain is ATP synthase subunit alpha, found in Desulforudis audaxviator (strain MP104C).